Reading from the N-terminus, the 389-residue chain is Zip homologous protein 3 (389 aa).

The segment at 6 to 43 (CNKCFNRKPPDGFFISSCFHIFCTKCAKADLAVCLICK) adopts an RING-type zinc-finger fold. Residues 123–164 (LAEATAWIQMAEKKLQASEEERVKAEREIEECQAKLKSMTNL) adopt a coiled-coil conformation. Positions 366 to 389 (ISSQPGYLAQRKPINGRSFIGPAD) are disordered.

In terms of assembly, interacts with zhp-4; the interaction is required for their localization along paired chromosomes and stability, and for the formation of chiasma during meiotic recombination. In terms of tissue distribution, expressed througout the gonad (at protein level). Expressed in the germline.

Its subcellular location is the chromosome. Recruited co-dependently with zhp-4 to the synaptonemal complex between homologous chromosome pairs to regulate the formation and number of crossover events between homologs during meiotic recombination. In the early stages of pachytene, in complex with zhp-4, recruited by the zhp-1-zhp-2 heterodimer to designated crossover sites along the homolog pair to stabilize other pro-crossover factors such as rmh-1, msh-5 and cosa-1. This in turn facilitates crossover and promotes the formation of chiasma in each meiotic nucleus at the late pachytene stage of meiosis. Plays a role in the segregation of homologous chromosomes following the completion of crossovers. Together with him-14 and msh-5 plays a role in the activation of DNA damage-dependent apoptosis at the DNA damage checkpoint in pachytene cells. This chain is Zip homologous protein 3, found in Caenorhabditis elegans.